The sequence spans 911 residues: Protein translocase subunit SecA (911 aa).

Residues Gln-87, 105–109 (GEGKT), and Asp-512 each bind ATP. The interval 865-892 (AAEQDGAEEGAVATATAPVRSENKVGRN) is disordered. The segment covering 873–883 (EGAVATATAPV) has biased composition (low complexity). Positions 895, 897, 906, and 907 each coordinate Zn(2+).

Belongs to the SecA family. As to quaternary structure, monomer and homodimer. Part of the essential Sec protein translocation apparatus which comprises SecA, SecYEG and auxiliary proteins SecDF-YajC and YidC. Zn(2+) is required as a cofactor.

It localises to the cell inner membrane. The protein localises to the cytoplasm. It catalyses the reaction ATP + H2O + cellular proteinSide 1 = ADP + phosphate + cellular proteinSide 2.. Its function is as follows. Part of the Sec protein translocase complex. Interacts with the SecYEG preprotein conducting channel. Has a central role in coupling the hydrolysis of ATP to the transfer of proteins into and across the cell membrane, serving both as a receptor for the preprotein-SecB complex and as an ATP-driven molecular motor driving the stepwise translocation of polypeptide chains across the membrane. In Ectopseudomonas mendocina (strain ymp) (Pseudomonas mendocina), this protein is Protein translocase subunit SecA.